We begin with the raw amino-acid sequence, 435 residues long: MNIERADFVDRVKIFVKAGDGGNGCVSFRREKYVPKGGPDGGDGGNGGFVFLRANPSVSTLIEFVNKRKFMAENGKHGMGKKMKGRNGKDLFIDVPVGTVVKDAVTGEVIADLNEPGKIVCVARGGRGGRGNAHFATSIKQAPLIAERGEKGESRWLELELKILADVGLVGYPNVGKSSLISRISNARPKIANYPFTTLIPNLGVVKYDDFSFVVADIPGLIEGASEGVGLGNVFLRHVERCYLIAHVIDVSGYEREDPVRDYFVIREEMKKYSPFLLEKPEIVVANKIDLIGKEELEKILKRLRDATNREVIPVSAVTGEGIDLLVSKLASIVREMKVEKPERKEEKFVKPSPVWRRLPEKFHLEVVKEDEGYWVVEGENLRVWIERFDLNQRDARLMLLQVLEKNGLNNKLKEAGVKEGDVVRIGDFEFEYRE.

The region spanning 6–164 is the Obg domain; that stretch reads ADFVDRVKIF…RWLELELKIL (159 aa). The OBG-type G domain maps to 165–335; sequence ADVGLVGYPN…LVSKLASIVR (171 aa). GTP-binding positions include 171–178, 196–200, 217–220, 287–290, and 316–318; these read GYPNVGKS, FTTLI, DIPG, NKID, and SAV. 2 residues coordinate Mg(2+): serine 178 and threonine 198. One can recognise an OCT domain in the interval 357-435; it reads RRLPEKFHLE…IGDFEFEYRE (79 aa).

The protein belongs to the TRAFAC class OBG-HflX-like GTPase superfamily. OBG GTPase family. As to quaternary structure, monomer. Mg(2+) serves as cofactor.

It is found in the cytoplasm. Its function is as follows. An essential GTPase which binds GTP, GDP and possibly (p)ppGpp with moderate affinity, with high nucleotide exchange rates and a fairly low GTP hydrolysis rate. Plays a role in control of the cell cycle, stress response, ribosome biogenesis and in those bacteria that undergo differentiation, in morphogenesis control. The sequence is that of GTPase Obg from Thermotoga maritima (strain ATCC 43589 / DSM 3109 / JCM 10099 / NBRC 100826 / MSB8).